A 127-amino-acid polypeptide reads, in one-letter code: Competence protein ComGF (127 aa).

In terms of assembly, the transformation pili are flexible filaments, consisting mainly of the major pilin ComGC and smaller amounts of the minor pilins, including at least ComGD, ComGF and ComGG. Interacts with ComGD. Interacts with ComGG.

The protein resides in the cell membrane. The protein localises to the fimbrium. Its function is as follows. Required for formation of the type IV-like pilus (T4P) that plays a role in transformation. Involved in transformation. Transformation pili are dynamically extended and retracted, perhaps thereby promoting DNA uptake and transformation. Required for transformation and DNA binding. The chain is Competence protein ComGF (comGF) from Bacillus subtilis (strain 168).